A 353-amino-acid chain; its full sequence is Carbamoyl phosphate synthase arginine-specific small chain (353 aa).

The interval 1–162 (MEGYLVLEDG…EISTFGDGNK (162 aa)) is CPSase. Positions 44, 210, and 212 each coordinate L-glutamine. One can recognise a Glutamine amidotransferase type-1 domain in the interval 163–349 (HIALIDFGYK…LKNVIPARRE (187 aa)). Cys237 functions as the Nucleophile in the catalytic mechanism. L-glutamine-binding residues include Leu238, Gln241, Asn279, and Tyr282. Catalysis depends on residues His322 and Glu324.

It belongs to the CarA family. In terms of assembly, composed of two chains; the small (or glutamine) chain promotes the hydrolysis of glutamine to ammonia, which is used by the large (or ammonia) chain to synthesize carbamoyl phosphate. Tetramer of heterodimers (alpha,beta)4.

It catalyses the reaction hydrogencarbonate + L-glutamine + 2 ATP + H2O = carbamoyl phosphate + L-glutamate + 2 ADP + phosphate + 2 H(+). The enzyme catalyses L-glutamine + H2O = L-glutamate + NH4(+). The protein operates within amino-acid biosynthesis; L-arginine biosynthesis; carbamoyl phosphate from bicarbonate: step 1/1. Functionally, small subunit of the glutamine-dependent carbamoyl phosphate synthetase (CPSase). CPSase catalyzes the formation of carbamoyl phosphate from the ammonia moiety of glutamine, carbonate, and phosphate donated by ATP, constituting the first step of the biosynthetic pathway leading to arginine and/or urea. The small subunit (glutamine amidotransferase) binds and cleaves glutamine to supply the large subunit with the substrate ammonia. The protein is Carbamoyl phosphate synthase arginine-specific small chain of Bacillus subtilis (strain 168).